Consider the following 132-residue polypeptide: Small ribosomal subunit protein uS8 (132 aa).

Belongs to the universal ribosomal protein uS8 family. As to quaternary structure, part of the 30S ribosomal subunit. Contacts proteins S5 and S12.

Functionally, one of the primary rRNA binding proteins, it binds directly to 16S rRNA central domain where it helps coordinate assembly of the platform of the 30S subunit. The polypeptide is Small ribosomal subunit protein uS8 (Clostridium kluyveri (strain NBRC 12016)).